A 293-amino-acid polypeptide reads, in one-letter code: Probable E3 ubiquitin-protein ligase RNF144A-B (293 aa).

Positions 16 to 237 are TRIAD supradomain; that stretch reads PLLSCKLCLG…YDKGPCRNKL (222 aa). The Zn(2+) site is built by Cys-20, Cys-23, Cys-43, Cys-46, Cys-111, Cys-116, Cys-135, Cys-138, Cys-143, Cys-146, His-151, Cys-156, Cys-186, and Cys-189. The RING-type 1 zinc-finger motif lies at 20-70; it reads CKLCLGEFPLEQMTTISQCQCIFCSLCLKQYVELLIKEGLETAISCPDSAC. The IBR-type zinc-finger motif lies at 91–156; sequence QHYKRLQFER…RADCHTGQAC (66 aa). The segment at 186–215 adopts an RING-type 2; atypical zinc-finger fold; that stretch reads CPKCKVYIERDEGCAQMMCKNCKHAFCWYC. Cys-199 is an active-site residue. Zn(2+) contacts are provided by Cys-204, Cys-207, Cys-212, Cys-215, His-227, and Cys-233. Residues 251–271 traverse the membrane as a helical segment; it reads VVGIFAGFGLLLLVASPFLLL.

Belongs to the RBR family. RNF144 subfamily.

It is found in the membrane. It catalyses the reaction [E2 ubiquitin-conjugating enzyme]-S-ubiquitinyl-L-cysteine + [acceptor protein]-L-lysine = [E2 ubiquitin-conjugating enzyme]-L-cysteine + [acceptor protein]-N(6)-ubiquitinyl-L-lysine.. It functions in the pathway protein modification; protein ubiquitination. Its function is as follows. E3 ubiquitin-protein ligase which accepts ubiquitin from E2 ubiquitin-conjugating enzymes ube2l3 and ube2l6 in the form of a thioester and then directly transfers the ubiquitin to targeted substrates. The protein is Probable E3 ubiquitin-protein ligase RNF144A-B (rnf144ab) of Danio rerio (Zebrafish).